The sequence spans 195 residues: TM2 domain-containing protein C41D11.9 (195 aa).

The first 20 residues, 1–20, serve as a signal peptide directing secretion; that stretch reads MLHKILFLICLASFIPTIGS. Residues 21–136 are Extracellular-facing; the sequence is ISGTKDVKSK…NWSSGYSWTK (116 aa). Asn-55, Asn-93, and Asn-127 each carry an N-linked (GlcNAc...) asparagine glycan. One can recognise a TM2 domain in the interval 131–179; sequence GYSWTKTMILSVVLGGFGADRFYLGLWKSAIGKLFSFGGLGVWTLVDVV. Residues 137 to 157 traverse the membrane as a helical segment; that stretch reads TMILSVVLGGFGADRFYLGLW. Over 158–163 the chain is Cytoplasmic; that stretch reads KSAIGK. A helical transmembrane segment spans residues 164-184; that stretch reads LFSFGGLGVWTLVDVVLIAVG. Residues 185-195 are Extracellular-facing; sequence YIKPYDGSMYI.

It belongs to the TM2 family.

The protein localises to the membrane. The polypeptide is TM2 domain-containing protein C41D11.9 (Caenorhabditis elegans).